The chain runs to 151 residues: uncharacterized protein (151 aa).

Residues 1-151 (MAELASIIRP…SSKTTTLKAR (151 aa)) form a disordered region. The segment covering 33 to 45 (STGLSDLLMLLQS) has biased composition (low complexity). A compositionally biased stretch (basic residues) spans 53 to 64 (RARRRTVCRPRR). Low complexity predominate over residues 108–123 (SSSSNTSSGTATSGES). Basic and acidic residues predominate over residues 126–141 (ADWRDSSSASDDDRIP).

This is an uncharacterized protein from Aotus trivirgatus (Three-striped night monkey).